The sequence spans 190 residues: MIILGIDPGLSLTGWGVVEAFSRDKVNPLQYGCIKTMPSVPLIQRLQTINTKLQSVIDKYKPEVASIEELFFFKATKSIAAVGQTRGAIILTASLNKIPLFEYNPKSVKTALTGYGSADKYQMQRIVKTFLRLKEIPKPDDAADALAIAVCHVNTINWNANNNNNASVFLKNKVFKESAKPNLLKKLFSL.

Residues Asp7, Glu68, and Asp141 contribute to the active site. Residues Asp7, Glu68, and Asp141 each contribute to the Mg(2+) site.

Belongs to the RuvC family. Homodimer which binds Holliday junction (HJ) DNA. The HJ becomes 2-fold symmetrical on binding to RuvC with unstacked arms; it has a different conformation from HJ DNA in complex with RuvA. In the full resolvosome a probable DNA-RuvA(4)-RuvB(12)-RuvC(2) complex forms which resolves the HJ. Requires Mg(2+) as cofactor.

The protein localises to the cytoplasm. The enzyme catalyses Endonucleolytic cleavage at a junction such as a reciprocal single-stranded crossover between two homologous DNA duplexes (Holliday junction).. The RuvA-RuvB-RuvC complex processes Holliday junction (HJ) DNA during genetic recombination and DNA repair. Endonuclease that resolves HJ intermediates. Cleaves cruciform DNA by making single-stranded nicks across the HJ at symmetrical positions within the homologous arms, yielding a 5'-phosphate and a 3'-hydroxyl group; requires a central core of homology in the junction. The consensus cleavage sequence is 5'-(A/T)TT(C/G)-3'. Cleavage occurs on the 3'-side of the TT dinucleotide at the point of strand exchange. HJ branch migration catalyzed by RuvA-RuvB allows RuvC to scan DNA until it finds its consensus sequence, where it cleaves and resolves the cruciform DNA. The chain is Crossover junction endodeoxyribonuclease RuvC from Endomicrobium trichonymphae.